The primary structure comprises 136 residues: Protein NrdI (136 aa).

The protein belongs to the NrdI family.

Its function is as follows. Probably involved in ribonucleotide reductase function. The polypeptide is Protein NrdI (Salmonella dublin (strain CT_02021853)).